The chain runs to 211 residues: Ribosomal RNA large subunit methyltransferase E (211 aa).

S-adenosyl-L-methionine-binding residues include Gly-60, Trp-62, Asp-80, Asp-96, and Asp-121. The active-site Proton acceptor is the Lys-161.

The protein belongs to the class I-like SAM-binding methyltransferase superfamily. RNA methyltransferase RlmE family.

The protein resides in the cytoplasm. The catalysed reaction is uridine(2552) in 23S rRNA + S-adenosyl-L-methionine = 2'-O-methyluridine(2552) in 23S rRNA + S-adenosyl-L-homocysteine + H(+). Its function is as follows. Specifically methylates the uridine in position 2552 of 23S rRNA at the 2'-O position of the ribose in the fully assembled 50S ribosomal subunit. The protein is Ribosomal RNA large subunit methyltransferase E of Cellvibrio japonicus (strain Ueda107) (Pseudomonas fluorescens subsp. cellulosa).